The following is a 283-amino-acid chain: MAGNFWQSSHYLQWILDKQDLLKERQKDLKFLSEEEYWKLQIFFTNVIQALGEHLKLRQQVIATATVYFKRFYARYSLKSIDPVLMAPTCVFLASKVEEFGVVSNTRLISAATSVLKTRFSYAFPKEFPYRMNHILECEFYLLELMDCCLIVYHPYRPLLQYVQDMGQEDMLLPLAWRIVNDTYRTDLCLLYPPFMIALACLHVACVVQQKDARQWFAELSVDMEKILEIIRVILKLYEQWKNFDERKEMASILSKMPKPKPPPNSDGEQGTNGSQSSGYSQS.

One can recognise a Cyclin N-terminal domain in the interval 46–144 (NVIQALGEHL…ILECEFYLLE (99 aa)). A disordered region spans residues 252-283 (SILSKMPKPKPPPNSDGEQGTNGSQSSGYSQS). Positions 267–283 (DGEQGTNGSQSSGYSQS) are enriched in polar residues.

The protein belongs to the cyclin family. Cyclin C subfamily. In terms of assembly, component of the Mediator complex. The cylin/CDK pair formed by ccnc/cdk8 also associates with the large subunit of RNA polymerase II.

It localises to the nucleus. Functionally, component of the Mediator complex, a coactivator involved in regulated gene transcription of nearly all RNA polymerase II-dependent genes. Mediator functions as a bridge to convey information from gene-specific regulatory proteins to the basal RNA polymerase II transcription machinery. Mediator is recruited to promoters by direct interactions with regulatory proteins and serves as a scaffold for the assembly of a functional preinitiation complex with RNA polymerase II and the general transcription factors. Binds to and activates cyclin-dependent kinase cdk8 that phosphorylates the CTD (C-terminal domain) of the large subunit of RNA polymerase II (RNAp II), which may inhibit the formation of a transcription initiation complex. The protein is Cyclin-C (ccnc) of Xenopus laevis (African clawed frog).